The primary structure comprises 351 residues: Cytochrome c biogenesis protein CcsA (351 aa).

The next 8 membrane-spanning stretches (helical) occupy residues 17–37 (VLFL…LPAI), 38–58 (NALG…LLGA), 68–88 (LSNL…VHLI), 97–117 (LVGV…TLTL), 143–163 (MMLS…FLVI), 259–279 (IIGL…VWAN), 286–306 (WSWD…AAYL), and 320–340 (AILA…VNLL).

Belongs to the CcmF/CycK/Ccl1/NrfE/CcsA family. May interact with ccs1.

Its subcellular location is the cellular thylakoid membrane. Its function is as follows. Required during biogenesis of c-type cytochromes (cytochrome c6 and cytochrome f) at the step of heme attachment. This Nostoc sp. (strain PCC 7120 / SAG 25.82 / UTEX 2576) protein is Cytochrome c biogenesis protein CcsA.